A 1025-amino-acid polypeptide reads, in one-letter code: Dihydropyrimidine dehydrogenase [NADP(+)] (1025 aa).

The region spanning 69–100 (ERGALREAMRCLKCADAPCQKSCPTNLDIKSF) is the 4Fe-4S ferredoxin-type 1 domain. Positions 79, 82, 87, and 91 each coordinate [4Fe-4S] cluster. Position 129 (V129) interacts with FAD. Positions 130, 136, 140, and 156 each coordinate [4Fe-4S] cluster. FAD contacts are provided by residues 194 to 198 (GAGPA), 218 to 226 (EKQEYVGGI), R235, and L261. NADP(+) is bound by residues 340 to 343 (AGDT), 364 to 365 (RK), and R371. K384 bears the N6-acetyllysine mark. Residues 437–439 (AFG) and 481–487 (DVVGIAN) contribute to the NADP(+) site. 480–489 (GDVVGIANTT) lines the FAD pocket. FMN is bound by residues S550 and 574–575 (KT). Substrate contacts are provided by residues N609 and 668-670 (NLS). The active-site Proton acceptor is the C671. Residue K709 participates in FMN binding. 736–737 (NT) serves as a coordination point for substrate. FMN-binding positions include G767, 793 to 795 (TGG), and 816 to 817 (CS). 2 consecutive 4Fe-4S ferredoxin-type domains span residues 944 to 976 (VVAVIDEEMCINCGKCYMTCNDSGYQAIQFDPE) and 978 to 1007 (HLPTVTDTCTGCTLCLSVCPIIDCIKMVSR). C953, C956, C959, C963, C986, C989, C992, and C996 together coordinate [4Fe-4S] cluster.

This sequence belongs to the dihydropyrimidine dehydrogenase family. In terms of assembly, homodimer. Requires FAD as cofactor. FMN is required as a cofactor. It depends on [4Fe-4S] cluster as a cofactor.

Its subcellular location is the cytoplasm. The catalysed reaction is 5,6-dihydrouracil + NADP(+) = uracil + NADPH + H(+). It catalyses the reaction 5,6-dihydrothymine + NADP(+) = thymine + NADPH + H(+). It functions in the pathway amino-acid biosynthesis; beta-alanine biosynthesis. Inactivated by 5-iodouracil. In terms of biological role, involved in pyrimidine base degradation. Catalyzes the reduction of uracil and thymine. Also involved the degradation of the chemotherapeutic drug 5-fluorouracil. In Bos taurus (Bovine), this protein is Dihydropyrimidine dehydrogenase [NADP(+)] (DPYD).